Here is a 396-residue protein sequence, read N- to C-terminus: Tryptophan synthase beta chain (396 aa).

Lysine 86 is modified (N6-(pyridoxal phosphate)lysine).

Belongs to the TrpB family. As to quaternary structure, tetramer of two alpha and two beta chains. The cofactor is pyridoxal 5'-phosphate.

The enzyme catalyses (1S,2R)-1-C-(indol-3-yl)glycerol 3-phosphate + L-serine = D-glyceraldehyde 3-phosphate + L-tryptophan + H2O. It participates in amino-acid biosynthesis; L-tryptophan biosynthesis; L-tryptophan from chorismate: step 5/5. The beta subunit is responsible for the synthesis of L-tryptophan from indole and L-serine. The polypeptide is Tryptophan synthase beta chain (Sodalis glossinidius (strain morsitans)).